The chain runs to 394 residues: Actin-related protein 2-B (394 aa).

ATP-binding positions include 160-162 (GDG), 214-218 (RMMKE), and 305-310 (GGSTMY).

The protein belongs to the actin family. ARP2 subfamily. In terms of assembly, component of the Arp2/3 complex composed of actr2/arp2, actr3/arp3, arpc1b, arpc2, arpc3, arpc4 and arpc5.

The protein resides in the cytoplasm. It is found in the cytoskeleton. Its subcellular location is the cell projection. The protein localises to the nucleus. Its function is as follows. ATP-binding component of the Arp2/3 complex, a multiprotein complex that mediates actin polymerization upon stimulation by nucleation-promoting factor (NPF). The Arp2/3 complex mediates the formation of branched actin networks in the cytoplasm, providing the force for cell motility. Seems to contact the pointed end of the daughter actin filament. In addition to its role in the cytoplasmic cytoskeleton, the Arp2/3 complex also promotes actin polymerization in the nucleus, thereby regulating gene transcription and repair of damaged DNA. The Arp2/3 complex promotes homologous recombination (HR) repair in response to DNA damage by promoting nuclear actin polymerization, leading to drive motility of double-strand breaks (DSBs). In Danio rerio (Zebrafish), this protein is Actin-related protein 2-B (actr2b).